Reading from the N-terminus, the 587-residue chain is APOBEC1 complementation factor (587 aa).

RRM domains follow at residues 56-134 (CEIF…ASVD), 136-218 (CRLF…WAEP), and 231-303 (KILY…LAKP). The interval 360–409 (HFPATKGHLSNRAIIRAPSVRGAAGVRGLGGRGYLAYTGLGRGYQVKGDK) is required for nuclear localization. Phosphothreonine is present on Thr-491.

In terms of assembly, part of the apolipoprotein B mRNA editing complex with APOBEC1. Interacts with TNPO2; TNPO2 may be responsible for transport of A1CF into the nucleus. Interacts with SYNCRIP. Interacts with CELF2/CUGBP2. Interacts with RBM47.

The protein resides in the nucleus. It localises to the endoplasmic reticulum. It is found in the cytoplasm. Functionally, essential component of the apolipoprotein B mRNA editing enzyme complex which is responsible for the postranscriptional editing of a CAA codon for Gln to a UAA codon for stop in APOB mRNA. Binds to APOB mRNA and is probably responsible for docking the catalytic subunit, APOBEC1, to the mRNA to allow it to deaminate its target cytosine. The complex also seems to protect the edited APOB mRNA from nonsense-mediated decay. The chain is APOBEC1 complementation factor (A1CF) from Pongo abelii (Sumatran orangutan).